We begin with the raw amino-acid sequence, 207 residues long: MIRIKVCGITNIEDAINISKAGVDALGFILAESPRKVELSKVLEISKELPPFVSRVAVVVNPVKEEIEKIERSKVFDYVQFHGSEDVNIIKNCKLKTIKAIKIENKSSLEEISKYNDFVDYFLFDTKIGEKIGGTGHTFNWEILKEANIKKPFILAGGLSPENIVEAIKTIRPNAVDLNSKVELYPGKKDIRLIKETIDRINSIKIK.

It belongs to the TrpF family.

It catalyses the reaction N-(5-phospho-beta-D-ribosyl)anthranilate = 1-(2-carboxyphenylamino)-1-deoxy-D-ribulose 5-phosphate. It participates in amino-acid biosynthesis; L-tryptophan biosynthesis; L-tryptophan from chorismate: step 3/5. This chain is N-(5'-phosphoribosyl)anthranilate isomerase, found in Petrotoga mobilis (strain DSM 10674 / SJ95).